A 75-amino-acid polypeptide reads, in one-letter code: Conotoxin Im23.5 (75 aa).

The signal sequence occupies residues 1-23; sequence MKFFTCLLLLLVVLTVVFDNVDA. Cystine bridges form between cysteine 24–cysteine 28, cysteine 37–cysteine 40, and cysteine 41–cysteine 43. A propeptide spanning residues 24–50 is cleaved from the precursor; sequence CDRSCTGVMGHPSCATCCACFTSAGKR.

Expressed by the venom duct.

It is found in the secreted. In terms of biological role, probable neurotoxin. The sequence is that of Conotoxin Im23.5 from Conus imperialis (Imperial cone).